The following is a 77-amino-acid chain: Sec-independent protein translocase protein TatA (77 aa).

A helical transmembrane segment spans residues 1 to 21 (MGGISIWQLLIIALIVVLLFG). Composition is skewed to basic and acidic residues over residues 47–56 (EKKALEDKEA) and 65–77 (TEKKPEADKKEQA). Residues 47–77 (EKKALEDKEAAAQTTQQATEKKPEADKKEQA) form a disordered region.

It belongs to the TatA/E family. In terms of assembly, the Tat system comprises two distinct complexes: a TatABC complex, containing multiple copies of TatA, TatB and TatC subunits, and a separate TatA complex, containing only TatA subunits. Substrates initially bind to the TatABC complex, which probably triggers association of the separate TatA complex to form the active translocon.

It localises to the cell inner membrane. Functionally, part of the twin-arginine translocation (Tat) system that transports large folded proteins containing a characteristic twin-arginine motif in their signal peptide across membranes. TatA could form the protein-conducting channel of the Tat system. This is Sec-independent protein translocase protein TatA from Shewanella amazonensis (strain ATCC BAA-1098 / SB2B).